Reading from the N-terminus, the 443-residue chain is Exodeoxyribonuclease 7 large subunit (443 aa).

It belongs to the XseA family. As to quaternary structure, heterooligomer composed of large and small subunits.

It is found in the cytoplasm. The enzyme catalyses Exonucleolytic cleavage in either 5'- to 3'- or 3'- to 5'-direction to yield nucleoside 5'-phosphates.. Bidirectionally degrades single-stranded DNA into large acid-insoluble oligonucleotides, which are then degraded further into small acid-soluble oligonucleotides. This is Exodeoxyribonuclease 7 large subunit from Stenotrophomonas maltophilia (strain R551-3).